A 263-amino-acid chain; its full sequence is 4-hydroxy-tetrahydrodipicolinate reductase (263 aa).

NAD(+) contacts are provided by residues 8–13 (GACGRM), Asp34, 99–101 (GTT), and 125–128 (SPNY). His157 serves as the catalytic Proton donor/acceptor. Position 158 (His158) interacts with (S)-2,3,4,5-tetrahydrodipicolinate. Catalysis depends on Lys161, which acts as the Proton donor. 167 to 168 (GT) is a (S)-2,3,4,5-tetrahydrodipicolinate binding site.

Belongs to the DapB family.

The protein resides in the cytoplasm. The enzyme catalyses (S)-2,3,4,5-tetrahydrodipicolinate + NAD(+) + H2O = (2S,4S)-4-hydroxy-2,3,4,5-tetrahydrodipicolinate + NADH + H(+). It catalyses the reaction (S)-2,3,4,5-tetrahydrodipicolinate + NADP(+) + H2O = (2S,4S)-4-hydroxy-2,3,4,5-tetrahydrodipicolinate + NADPH + H(+). It functions in the pathway amino-acid biosynthesis; L-lysine biosynthesis via DAP pathway; (S)-tetrahydrodipicolinate from L-aspartate: step 4/4. In terms of biological role, catalyzes the conversion of 4-hydroxy-tetrahydrodipicolinate (HTPA) to tetrahydrodipicolinate. The polypeptide is 4-hydroxy-tetrahydrodipicolinate reductase (Methanosarcina acetivorans (strain ATCC 35395 / DSM 2834 / JCM 12185 / C2A)).